Here is a 614-residue protein sequence, read N- to C-terminus: uncharacterized protein (614 aa).

This is an uncharacterized protein from Lactococcus lactis subsp. cremoris (strain MG1363).